The chain runs to 246 residues: Probable transcriptional regulatory protein YebC (246 aa).

The disordered stretch occupies residues 1–20 (MAGHSKWANTRHRKAAQDAK).

The protein belongs to the TACO1 family.

It is found in the cytoplasm. The chain is Probable transcriptional regulatory protein YebC from Escherichia coli O6:K15:H31 (strain 536 / UPEC).